Consider the following 251-residue polypeptide: Flagellar basal-body rod protein FlgF (251 aa).

This sequence belongs to the flagella basal body rod proteins family. As to quaternary structure, the basal body constitutes a major portion of the flagellar organelle and consists of five rings (E,L,P,S, and M) mounted on a central rod. The rod consists of about 26 subunits of FlgG in the distal portion, and FlgB, FlgC and FlgF are thought to build up the proximal portion of the rod with about 6 subunits each.

Its subcellular location is the bacterial flagellum basal body. In Salmonella typhimurium (strain LT2 / SGSC1412 / ATCC 700720), this protein is Flagellar basal-body rod protein FlgF (flgF).